A 376-amino-acid polypeptide reads, in one-letter code: 3-dehydroquinate synthase (376 aa).

NAD(+) is bound by residues 115-119 (GVIGD), 139-140 (TS), Lys-152, and Lys-161. Residues Glu-194, His-256, and His-275 each coordinate Zn(2+).

The protein belongs to the sugar phosphate cyclases superfamily. Dehydroquinate synthase family. It depends on Co(2+) as a cofactor. Requires Zn(2+) as cofactor. NAD(+) serves as cofactor.

The protein resides in the cytoplasm. The catalysed reaction is 7-phospho-2-dehydro-3-deoxy-D-arabino-heptonate = 3-dehydroquinate + phosphate. Its pathway is metabolic intermediate biosynthesis; chorismate biosynthesis; chorismate from D-erythrose 4-phosphate and phosphoenolpyruvate: step 2/7. In terms of biological role, catalyzes the conversion of 3-deoxy-D-arabino-heptulosonate 7-phosphate (DAHP) to dehydroquinate (DHQ). This Rhizobium johnstonii (strain DSM 114642 / LMG 32736 / 3841) (Rhizobium leguminosarum bv. viciae) protein is 3-dehydroquinate synthase.